The following is a 304-amino-acid chain: tRNA dimethylallyltransferase (304 aa).

16 to 23 (GPTASGKS) provides a ligand contact to ATP. A substrate-binding site is contributed by 18-23 (TASGKS). Interaction with substrate tRNA stretches follow at residues 41-44 (DSMQ) and 165-169 (QRIIR).

It belongs to the IPP transferase family. As to quaternary structure, monomer. Requires Mg(2+) as cofactor.

The catalysed reaction is adenosine(37) in tRNA + dimethylallyl diphosphate = N(6)-dimethylallyladenosine(37) in tRNA + diphosphate. Its function is as follows. Catalyzes the transfer of a dimethylallyl group onto the adenine at position 37 in tRNAs that read codons beginning with uridine, leading to the formation of N6-(dimethylallyl)adenosine (i(6)A). This is tRNA dimethylallyltransferase from Allorhizobium ampelinum (strain ATCC BAA-846 / DSM 112012 / S4) (Agrobacterium vitis (strain S4)).